We begin with the raw amino-acid sequence, 479 residues long: Sulfate adenylyltransferase subunit 1 (479 aa).

Residues 25 to 239 (KSLLRFLTCG…EVLETVDIQR (215 aa)) enclose the tr-type G domain. The G1 stretch occupies residues 34 to 41 (GSVDDGKS). Position 34–41 (34–41 (GSVDDGKS)) interacts with GTP. Residues 92 to 96 (GITID) are G2. The tract at residues 113–116 (DTPG) is G3. GTP contacts are provided by residues 113–117 (DTPGH) and 168–171 (NKMD). A G4 region spans residues 168–171 (NKMD). The tract at residues 206 to 208 (SAL) is G5.

Belongs to the TRAFAC class translation factor GTPase superfamily. Classic translation factor GTPase family. CysN/NodQ subfamily. As to quaternary structure, heterodimer composed of CysD, the smaller subunit, and CysN.

It carries out the reaction sulfate + ATP + H(+) = adenosine 5'-phosphosulfate + diphosphate. It participates in sulfur metabolism; hydrogen sulfide biosynthesis; sulfite from sulfate: step 1/3. Functionally, with CysD forms the ATP sulfurylase (ATPS) that catalyzes the adenylation of sulfate producing adenosine 5'-phosphosulfate (APS) and diphosphate, the first enzymatic step in sulfur assimilation pathway. APS synthesis involves the formation of a high-energy phosphoric-sulfuric acid anhydride bond driven by GTP hydrolysis by CysN coupled to ATP hydrolysis by CysD. The polypeptide is Sulfate adenylyltransferase subunit 1 (Salmonella typhimurium (strain LT2 / SGSC1412 / ATCC 700720)).